Reading from the N-terminus, the 121-residue chain is Small ribosomal subunit protein uS13 (121 aa).

Residues 91 to 121 form a disordered region; it reads HRKGLPMRGQRTRTNARTRKGPRKAGVALKK.

Belongs to the universal ribosomal protein uS13 family. In terms of assembly, part of the 30S ribosomal subunit. Forms a loose heterodimer with protein S19. Forms two bridges to the 50S subunit in the 70S ribosome.

Its function is as follows. Located at the top of the head of the 30S subunit, it contacts several helices of the 16S rRNA. In the 70S ribosome it contacts the 23S rRNA (bridge B1a) and protein L5 of the 50S subunit (bridge B1b), connecting the 2 subunits; these bridges are implicated in subunit movement. Contacts the tRNAs in the A and P-sites. The polypeptide is Small ribosomal subunit protein uS13 (Cupriavidus taiwanensis (strain DSM 17343 / BCRC 17206 / CCUG 44338 / CIP 107171 / LMG 19424 / R1) (Ralstonia taiwanensis (strain LMG 19424))).